The primary structure comprises 454 residues: UDP-N-acetylmuramate--L-alanine ligase (454 aa).

Position 109–115 (109–115) interacts with ATP; that stretch reads GTHGKTT.

It belongs to the MurCDEF family.

It localises to the cytoplasm. The enzyme catalyses UDP-N-acetyl-alpha-D-muramate + L-alanine + ATP = UDP-N-acetyl-alpha-D-muramoyl-L-alanine + ADP + phosphate + H(+). The protein operates within cell wall biogenesis; peptidoglycan biosynthesis. Functionally, cell wall formation. This chain is UDP-N-acetylmuramate--L-alanine ligase, found in Protochlamydia amoebophila (strain UWE25).